The chain runs to 214 residues: External core antigen (214 aa).

Residues 1 to 19 (MQLFHLCLIISCTCPTLQA) form the signal peptide. The HBEAG stretch occupies residues 25-27 (GWL). The tract at residues 164-214 (PNAPILSTLPETTVVRRRDRGRSPRRRTPSPRRRRSQSPRRRRSQSRESQC) is disordered. Basic residues predominate over residues 178–207 (VRRRDRGRSPRRRTPSPRRRRSQSPRRRRS). The 1; half-length repeat unit spans residues 186–192 (SPRRRTP). The 3 X 8 AA repeats of S-P-R-R-R-R-S-Q stretch occupies residues 186–208 (SPRRRTPSPRRRRSQSPRRRRSQ). Positions 186 to 214 (SPRRRTPSPRRRRSQSPRRRRSQSRESQC) are excised as a propeptide. 2 tandem repeats follow at residues 193–200 (SPRRRRSQ) and 201–208 (SPRRRRSQ).

Belongs to the orthohepadnavirus precore antigen family. In terms of assembly, homodimerizes. In terms of processing, phosphorylated. Post-translationally, cleaved by host furin.

Its subcellular location is the secreted. It localises to the host nucleus. May regulate immune response to the intracellular capsid in acting as a T-cell tolerogen, by having an immunoregulatory effect which prevents destruction of infected cells by cytotoxic T-cells. This immune regulation may predispose to chronicity during perinatal infections and prevent severe liver injury during adult infections. The chain is External core antigen from Homo sapiens (Human).